The primary structure comprises 378 residues: Cytochrome b (378 aa).

A run of 4 helical transmembrane segments spans residues Phe35–Met55, Trp79–Gly101, Thr114–Val134, and Phe180–Phe200. Residues His85 and His99 each contribute to the heme b site. Heme b is bound by residues His184 and His198. Residue His203 participates in a ubiquinone binding. Helical transmembrane passes span Tyr226–Phe246, Leu290–His310, Phe326–Cys346, and Val350–Leu370.

It belongs to the cytochrome b family. The main subunits of complex b-c1 are: cytochrome b, cytochrome c1 and the Rieske protein. Heme b is required as a cofactor.

The protein localises to the mitochondrion inner membrane. In terms of biological role, component of the ubiquinol-cytochrome c reductase complex (complex III or cytochrome b-c1 complex) that is part of the mitochondrial respiratory chain. The b-c1 complex mediates electron transfer from ubiquinol to cytochrome c. Contributes to the generation of a proton gradient across the mitochondrial membrane that is then used for ATP synthesis. In Paraspadella gotoi (Arrow worm), this protein is Cytochrome b (mt:Cyt-b).